Here is a 127-residue protein sequence, read N- to C-terminus: Small ribosomal subunit protein uS12 (127 aa).

The segment at 1-28 (MPTIQQLIRDERSKAKRKTKSPALKQCP) is disordered. Residue Asp-89 is modified to 3-methylthioaspartic acid. A disordered region spans residues 104–127 (ATGVKNRQKARSKYGTKRPKPAAK). A compositionally biased stretch (basic residues) spans 109–127 (NRQKARSKYGTKRPKPAAK).

This sequence belongs to the universal ribosomal protein uS12 family. As to quaternary structure, part of the 30S ribosomal subunit. Contacts proteins S8 and S17. May interact with IF1 in the 30S initiation complex.

With S4 and S5 plays an important role in translational accuracy. Functionally, interacts with and stabilizes bases of the 16S rRNA that are involved in tRNA selection in the A site and with the mRNA backbone. Located at the interface of the 30S and 50S subunits, it traverses the body of the 30S subunit contacting proteins on the other side and probably holding the rRNA structure together. The combined cluster of proteins S8, S12 and S17 appears to hold together the shoulder and platform of the 30S subunit. This chain is Small ribosomal subunit protein uS12, found in Microcystis aeruginosa (strain NIES-843 / IAM M-2473).